Reading from the N-terminus, the 662-residue chain is Probable actin-related protein 8 (662 aa).

2 stretches are compositionally biased toward basic and acidic residues: residues 50–59 (AGEKDAKETE) and 67–77 (TKQDDSKKSQV). The segment at 50–92 (AGEKDAKETESESANGDTKQDDSKKSQVEEEEDGIEESELGEE) is disordered. Over residues 78–89 (EEEEDGIEESEL) the composition is skewed to acidic residues. 339–342 (DMGA) serves as a coordination point for ATP.

The protein belongs to the actin family. In terms of assembly, component of the chromatin remodeling Ino80 complex. Exists as monomers and dimers, but the dimer is most probably the biologically relevant form required for stable interactions with histones that exploits the twofold symmetry of the nucleosome core.

The protein localises to the nucleus. Probably involved in transcription regulation via its interaction with the INO80 complex, a chromatin remodeling complex. Exhibits low basal ATPase activity, and unable to polymerize. Strongly prefer nucleosomes and H3-H4 tetramers over H2A-H2B dimers, suggesting it may act as a nucleosome recognition module within the complex. In Schizosaccharomyces pombe (strain 972 / ATCC 24843) (Fission yeast), this protein is Probable actin-related protein 8.